Consider the following 70-residue polypeptide: MNNQQKIKCPICDKQNTWRPDNLFRPFCSERCKLIDLGEWASESRKIPGSSIDPESIVTTNNKQDNVDEQ.

Zn(2+) contacts are provided by Cys9, Cys12, Cys28, and Cys32. The segment at 44–70 is disordered; the sequence is SRKIPGSSIDPESIVTTNNKQDNVDEQ.

It belongs to the DNA gyrase inhibitor YacG family. As to quaternary structure, interacts with GyrB. Requires Zn(2+) as cofactor.

In terms of biological role, inhibits all the catalytic activities of DNA gyrase by preventing its interaction with DNA. Acts by binding directly to the C-terminal domain of GyrB, which probably disrupts DNA binding by the gyrase. The sequence is that of DNA gyrase inhibitor YacG from Legionella pneumophila subsp. pneumophila (strain Philadelphia 1 / ATCC 33152 / DSM 7513).